A 258-amino-acid polypeptide reads, in one-letter code: Imidazole glycerol phosphate synthase subunit HisF (258 aa).

Catalysis depends on residues Asp12 and Asp131.

The protein belongs to the HisA/HisF family. Heterodimer of HisH and HisF.

The protein resides in the cytoplasm. The enzyme catalyses 5-[(5-phospho-1-deoxy-D-ribulos-1-ylimino)methylamino]-1-(5-phospho-beta-D-ribosyl)imidazole-4-carboxamide + L-glutamine = D-erythro-1-(imidazol-4-yl)glycerol 3-phosphate + 5-amino-1-(5-phospho-beta-D-ribosyl)imidazole-4-carboxamide + L-glutamate + H(+). Its pathway is amino-acid biosynthesis; L-histidine biosynthesis; L-histidine from 5-phospho-alpha-D-ribose 1-diphosphate: step 5/9. IGPS catalyzes the conversion of PRFAR and glutamine to IGP, AICAR and glutamate. The HisF subunit catalyzes the cyclization activity that produces IGP and AICAR from PRFAR using the ammonia provided by the HisH subunit. The chain is Imidazole glycerol phosphate synthase subunit HisF from Sinorhizobium fredii (strain NBRC 101917 / NGR234).